The chain runs to 490 residues: ATP synthase subunit beta, chloroplastic (490 aa).

Position 170–177 (170–177) interacts with ATP; it reads GGAGVGKT.

This sequence belongs to the ATPase alpha/beta chains family. F-type ATPases have 2 components, CF(1) - the catalytic core - and CF(0) - the membrane proton channel. CF(1) has five subunits: alpha(3), beta(3), gamma(1), delta(1), epsilon(1). CF(0) has four main subunits: a(1), b(1), b'(1) and c(9-12).

It localises to the plastid. The protein resides in the chloroplast thylakoid membrane. It carries out the reaction ATP + H2O + 4 H(+)(in) = ADP + phosphate + 5 H(+)(out). Produces ATP from ADP in the presence of a proton gradient across the membrane. The catalytic sites are hosted primarily by the beta subunits. This Ipomoea setosa (Brazilian morning glory) protein is ATP synthase subunit beta, chloroplastic.